The primary structure comprises 82 residues: Zinc finger CCCH domain-containing protein 13 (82 aa).

2 consecutive C3H1-type zinc fingers follow at residues 9-37 (RPGEPECSYYLRTGNCYLKQNCKYHHPKN) and 55-82 (RPGQAICPHYSRFGICRSGPTCKFDHFT).

This is Zinc finger CCCH domain-containing protein 13 from Arabidopsis thaliana (Mouse-ear cress).